A 269-amino-acid polypeptide reads, in one-letter code: Thymidylate synthase (269 aa).

DUMP-binding positions include Arg21 and Arg125 to Arg126. Cys145 functions as the Nucleophile in the catalytic mechanism. DUMP contacts are provided by residues Arg171–Asp174, Asn182, and His212–Tyr214. Residue Asp174 participates in (6R)-5,10-methylene-5,6,7,8-tetrahydrofolate binding. Ala268 lines the (6R)-5,10-methylene-5,6,7,8-tetrahydrofolate pocket.

It belongs to the thymidylate synthase family. Bacterial-type ThyA subfamily. As to quaternary structure, homodimer.

It is found in the cytoplasm. It carries out the reaction dUMP + (6R)-5,10-methylene-5,6,7,8-tetrahydrofolate = 7,8-dihydrofolate + dTMP. Its pathway is pyrimidine metabolism; dTTP biosynthesis. Functionally, catalyzes the reductive methylation of 2'-deoxyuridine-5'-monophosphate (dUMP) to 2'-deoxythymidine-5'-monophosphate (dTMP) while utilizing 5,10-methylenetetrahydrofolate (mTHF) as the methyl donor and reductant in the reaction, yielding dihydrofolate (DHF) as a by-product. This enzymatic reaction provides an intracellular de novo source of dTMP, an essential precursor for DNA biosynthesis. This is Thymidylate synthase from Cutibacterium acnes (strain DSM 16379 / KPA171202) (Propionibacterium acnes).